Consider the following 426-residue polypeptide: Histidinol dehydrogenase (426 aa).

Positions 130, 187, and 210 each coordinate NAD(+). Substrate contacts are provided by Ser-233, Gln-255, and His-258. 2 residues coordinate Zn(2+): Gln-255 and His-258. Catalysis depends on proton acceptor residues Glu-323 and His-324. Positions 324, 357, 411, and 416 each coordinate substrate. Asp-357 contributes to the Zn(2+) binding site. His-416 is a Zn(2+) binding site.

It belongs to the histidinol dehydrogenase family. The cofactor is Zn(2+).

It catalyses the reaction L-histidinol + 2 NAD(+) + H2O = L-histidine + 2 NADH + 3 H(+). It functions in the pathway amino-acid biosynthesis; L-histidine biosynthesis; L-histidine from 5-phospho-alpha-D-ribose 1-diphosphate: step 9/9. In terms of biological role, catalyzes the sequential NAD-dependent oxidations of L-histidinol to L-histidinaldehyde and then to L-histidine. The sequence is that of Histidinol dehydrogenase (hisD) from Aquifex aeolicus (strain VF5).